We begin with the raw amino-acid sequence, 287 residues long: Acetylglutamate kinase (287 aa).

Residues 64 to 65, Arg-86, and Asn-185 each bind substrate; that span reads GG.

It belongs to the acetylglutamate kinase family. ArgB subfamily.

The protein localises to the cytoplasm. It catalyses the reaction N-acetyl-L-glutamate + ATP = N-acetyl-L-glutamyl 5-phosphate + ADP. It participates in amino-acid biosynthesis; L-arginine biosynthesis; N(2)-acetyl-L-ornithine from L-glutamate: step 2/4. Its function is as follows. Catalyzes the ATP-dependent phosphorylation of N-acetyl-L-glutamate. The chain is Acetylglutamate kinase from Hydrogenobaculum sp. (strain Y04AAS1).